A 718-amino-acid chain; its full sequence is uncharacterized protein (718 aa).

The next 6 helical transmembrane spans lie at 9-29 (VISTIPVFIAVNIAAVGIWFF), 60-80 (NVFFTLIAFSISSFIVQLHIG), 83-103 (IQYIVLMTVLTFIFTMIGAVG), 136-156 (VMILCGTLLYSVVTLIVYLFF), 391-411 (IVVFLCCAIVEFFQFNLGYWI), and 506-526 (LLDTLLGAAISWFAVSYLWPD).

This sequence belongs to the YccS/YhfK family.

The protein resides in the cell membrane. This is an uncharacterized protein from Haemophilus influenzae (strain ATCC 51907 / DSM 11121 / KW20 / Rd).